The sequence spans 169 residues: Peptide methionine sulfoxide reductase MsrA (169 aa).

Cys10 is an active-site residue.

It belongs to the MsrA Met sulfoxide reductase family.

It catalyses the reaction L-methionyl-[protein] + [thioredoxin]-disulfide + H2O = L-methionyl-(S)-S-oxide-[protein] + [thioredoxin]-dithiol. It carries out the reaction [thioredoxin]-disulfide + L-methionine + H2O = L-methionine (S)-S-oxide + [thioredoxin]-dithiol. Its function is as follows. Has an important function as a repair enzyme for proteins that have been inactivated by oxidation. Catalyzes the reversible oxidation-reduction of methionine sulfoxide in proteins to methionine. In Streptococcus pyogenes serotype M6 (strain ATCC BAA-946 / MGAS10394), this protein is Peptide methionine sulfoxide reductase MsrA.